Reading from the N-terminus, the 302-residue chain is Bifunctional protein FolD 2 (302 aa).

NADP(+) is bound by residues 170 to 172 (GRS), serine 195, and isoleucine 236.

Belongs to the tetrahydrofolate dehydrogenase/cyclohydrolase family. As to quaternary structure, homodimer.

It carries out the reaction (6R)-5,10-methylene-5,6,7,8-tetrahydrofolate + NADP(+) = (6R)-5,10-methenyltetrahydrofolate + NADPH. The enzyme catalyses (6R)-5,10-methenyltetrahydrofolate + H2O = (6R)-10-formyltetrahydrofolate + H(+). The protein operates within one-carbon metabolism; tetrahydrofolate interconversion. Catalyzes the oxidation of 5,10-methylenetetrahydrofolate to 5,10-methenyltetrahydrofolate and then the hydrolysis of 5,10-methenyltetrahydrofolate to 10-formyltetrahydrofolate. This chain is Bifunctional protein FolD 2, found in Paracoccus denitrificans (strain Pd 1222).